We begin with the raw amino-acid sequence, 446 residues long: Tubulin alpha chain-like 3 (446 aa).

Positions 1-4 (MREC) match the MREC motif motif. Residues Gln-11, Glu-78, Ser-147, Gly-151, Thr-152, Thr-186, Asn-213, and Asn-235 each coordinate GTP. Glu-78 contributes to the Mg(2+) binding site. The active site involves Glu-261.

It belongs to the tubulin family. Dimer of alpha and beta chains. A typical microtubule is a hollow water-filled tube with an outer diameter of 25 nm and an inner diameter of 15 nM. Alpha-beta heterodimers associate head-to-tail to form protofilaments running lengthwise along the microtubule wall with the beta-tubulin subunit facing the microtubule plus end conferring a structural polarity. Microtubules usually have 13 protofilaments but different protofilament numbers can be found in some organisms and specialized cells. Requires Mg(2+) as cofactor. In terms of processing, some glutamate residues at the C-terminus are polyglycylated, resulting in polyglycine chains on the gamma-carboxyl group. Glycylation is mainly limited to tubulin incorporated into axonemes (cilia and flagella) whereas glutamylation is prevalent in neuronal cells, centrioles, axonemes, and the mitotic spindle. Both modifications can coexist on the same protein on adjacent residues, and lowering polyglycylation levels increases polyglutamylation, and reciprocally. Cilia and flagella glycylation is required for their stability and maintenance. Flagella glycylation controls sperm motility. Post-translationally, some glutamate residues at the C-terminus are polyglutamylated, resulting in polyglutamate chains on the gamma-carboxyl group. Polyglutamylation plays a key role in microtubule severing by spastin (SPAST). SPAST preferentially recognizes and acts on microtubules decorated with short polyglutamate tails: severing activity by SPAST increases as the number of glutamates per tubulin rises from one to eight, but decreases beyond this glutamylation threshold. Glutamylation is also involved in cilia motility.

It is found in the cytoplasm. The protein resides in the cytoskeleton. It carries out the reaction GTP + H2O = GDP + phosphate + H(+). Its function is as follows. Tubulin is the major constituent of microtubules, a cylinder consisting of laterally associated linear protofilaments composed of alpha- and beta-tubulin heterodimers. Microtubules grow by the addition of GTP-tubulin dimers to the microtubule end, where a stabilizing cap forms. Below the cap, tubulin dimers are in GDP-bound state, owing to GTPase activity of alpha-tubulin. This Mus musculus (Mouse) protein is Tubulin alpha chain-like 3 (Tubal3).